A 492-amino-acid chain; its full sequence is MKYKDLRDFIAMLEQQGKLKRIAHPVSPHLEMTEIADRVLRAEGPALLFENPVKPDGTRYGYPVLANLFGTPERVAMGMGADSVSKLREIGQTLAYLKEPEPPKGIKDAFSKLPLLKDIWSMAPNVVKNAPCQEIVWEGENVDLYKLPIQHCWPEDVAPLVTWGLTVTRGPHKKRQNLGIYRQQLIGKNKLIMRWLSHRGGALDYQEFRKLNPDTPYPVAVVLGCDPATILGAVTPVPDTLSEYQFAGLLRGSRTELVKCIGNDLQVPARAEIVLEGVIHPNETALEGPYGDHTGYYNEQDHFPVFTVERITMRENPIYHSTYTGKPPDEPAVLGVALNEVFVPLLQKQFPEITDFYLPPEGCSYRMAVVSMKKQYAGHAKRVMMGCWSFLRQFMYTKFIIVVDDDVNVRDWKEVIWAVTTRMDPVRDTVLVENTPIDYLDFASPVSGLGGKMGLDATNKWPGETDREWGRVIKKDPAVTAKIDGIWEELGL.

Residue asparagine 177 participates in Mn(2+) binding. Residues 180 to 182, 194 to 196, and 199 to 200 contribute to the prenylated FMN site; these read IYR, RWL, and RG. A Mn(2+)-binding site is contributed by glutamate 243. The active-site Proton donor is aspartate 292.

It belongs to the UbiD family. Homohexamer. It depends on prenylated FMN as a cofactor. Mn(2+) is required as a cofactor.

Its subcellular location is the cell membrane. The enzyme catalyses a 4-hydroxy-3-(all-trans-polyprenyl)benzoate + H(+) = a 2-(all-trans-polyprenyl)phenol + CO2. It functions in the pathway cofactor biosynthesis; ubiquinone biosynthesis. Its function is as follows. Catalyzes the decarboxylation of 3-octaprenyl-4-hydroxy benzoate to 2-octaprenylphenol, an intermediate step in ubiquinone biosynthesis. The polypeptide is 3-octaprenyl-4-hydroxybenzoate carboxy-lyase (Neisseria meningitidis serogroup C / serotype 2a (strain ATCC 700532 / DSM 15464 / FAM18)).